A 439-amino-acid chain; its full sequence is Perilipin-3 (439 aa).

Low complexity predominate over residues 1–19 (MFASETEASASSTQVTTEE). The disordered stretch occupies residues 1 to 26 (MFASETEASASSTQVTTEEPVQQPSV). N6-acetyllysine is present on lysine 66. At serine 92 the chain carries Phosphoserine. Residue lysine 123 forms a Glycyl lysine isopeptide (Lys-Gly) (interchain with G-Cter in SUMO1) linkage. At serine 131 the chain carries Phosphoserine. Threonine 175 bears the Phosphothreonine mark. 2 positions are modified to phosphoserine: serine 180 and serine 184. Threonine 221 is subject to Phosphothreonine. Phosphoserine is present on residues serine 222 and serine 246. Coiled-coil stretches lie at residues 254-282 (RAYE…QALS) and 358-381 (AHVK…FSGM). Tyrosine 256 carries the post-translational modification Phosphotyrosine.

It belongs to the perilipin family. As to quaternary structure, homooligomer. Interacts with M6PR (via the cytoplasmic domain). Interacts with IGF2R (via the cytoplasmic domain). Post-translationally, phosphorylation at Tyr-256 by isoform 1 of CHKA (CHKalpha2) promotes dissociation from lipid droplets: dissociation is followed by recruitment of autophagosome machinery to lipid droplets and subsequent lipid droplet lipolysis.

It localises to the lipid droplet. The protein resides in the endosome membrane. The protein localises to the cytoplasm. Structural component of lipid droplets, which is required for the formation and maintenance of lipid storage droplets. Required for the transport of mannose 6-phosphate receptors (MPR) from endosomes to the trans-Golgi network. The protein is Perilipin-3 (PLIN3) of Sus scrofa (Pig).